Here is a 1127-residue protein sequence, read N- to C-terminus: uncharacterized protein (1127 aa).

Residues 1-26 (MRIHQRSAPCVPVLLFLFLPSAPLCA) form the signal peptide. Residues 533–600 (ETESLSPPAD…ASSSPSEMAV (68 aa)) are disordered. 2 stretches are compositionally biased toward low complexity: residues 536-549 (SLSP…TPSP) and 583-599 (AGAS…SEMA). Positions 1076 to 1126 (SEDEKEYQRALQELQKGNKLVASAVVEQLLQKDRNKKSAKIQQLKKRIDAQ) form a coiled coil.

This is an uncharacterized protein from Treponema pallidum (strain Nichols).